The sequence spans 87 residues: MSRICIIRGTMPHKGRRIHRSGLAKKKGGIGRHVTKTVNRTVFPNLQEKRIWVPELGQFVKMKISAKALRTINKNGAYNTLKKVGLL.

This sequence belongs to the bacterial ribosomal protein bL28 family.

The polypeptide is Large ribosomal subunit protein bL28 (Akkermansia muciniphila (strain ATCC BAA-835 / DSM 22959 / JCM 33894 / BCRC 81048 / CCUG 64013 / CIP 107961 / Muc)).